We begin with the raw amino-acid sequence, 174 residues long: Balbiani ring protein 1 (174 aa).

Positions Lys-28–Arg-174 are disordered. A run of 8 repeats spans residues Glu-42–Glu-52, Lys-53–Glu-63, Lys-64–Glu-74, Lys-75–Glu-85, Glu-124–Glu-134, Lys-135–Glu-145, Lys-146–Glu-156, and Lys-157–Glu-167. 4 X 11 AA tandem repeats regions lie at residues Glu-42–Glu-85 and Glu-124–Glu-167. Composition is skewed to basic and acidic residues over residues Pro-49–Ala-100 and Arg-121–Ser-159.

Salivary gland.

It localises to the secreted. Used by the larvae to construct a supramolecular structure, the larval tube. This chain is Balbiani ring protein 1 (BR1), found in Chironomus tentans (Midge).